The following is a 519-amino-acid chain: 2-isopropylmalate synthase (519 aa).

Positions 5-267 (VIIFDTTLRD…YTNIHHHEIY (263 aa)) constitute a Pyruvate carboxyltransferase domain. Mn(2+)-binding residues include aspartate 14, histidine 202, histidine 204, and asparagine 238. Residues 392-519 (ALESFHIHST…NHKNTQHIKK (128 aa)) are regulatory domain.

It belongs to the alpha-IPM synthase/homocitrate synthase family. LeuA type 1 subfamily. As to quaternary structure, homodimer. Mn(2+) is required as a cofactor.

It localises to the cytoplasm. It catalyses the reaction 3-methyl-2-oxobutanoate + acetyl-CoA + H2O = (2S)-2-isopropylmalate + CoA + H(+). It functions in the pathway amino-acid biosynthesis; L-leucine biosynthesis; L-leucine from 3-methyl-2-oxobutanoate: step 1/4. In terms of biological role, catalyzes the condensation of the acetyl group of acetyl-CoA with 3-methyl-2-oxobutanoate (2-ketoisovalerate) to form 3-carboxy-3-hydroxy-4-methylpentanoate (2-isopropylmalate). The sequence is that of 2-isopropylmalate synthase from Blochmanniella floridana.